The chain runs to 303 residues: MPHQHKGIDKAKILTEALPYIQRFSGKTLVVKYGGNAMTDPELESSFARDIVLLKTVGLNPIVVHGGGPQVDSLLKRLGQVSDRIDGMRVTDEATMEVVEMVLGGSVNKSIVNLINQHGGRAIGLTGKDGNLIRARKLLMEKHDEQGDIKHIDLGLVGEVVGIKTDVLEMFTQSDFIPVIAPLGVDESGNTYNINADLVAGKVAEALGAEKLILLTNISGVLDENKNLLTGLSTQEVDRLIATGVIYGGMIPKVGCALDAVKGGVVSAHIVDGRVPHATLLEIFTDHGVGTLITNRLHAKSEH.

Substrate-binding positions include 67 to 68, Arg-89, and Asn-193; that span reads GG.

This sequence belongs to the acetylglutamate kinase family. ArgB subfamily.

The protein localises to the cytoplasm. The catalysed reaction is N-acetyl-L-glutamate + ATP = N-acetyl-L-glutamyl 5-phosphate + ADP. It participates in amino-acid biosynthesis; L-arginine biosynthesis; N(2)-acetyl-L-ornithine from L-glutamate: step 2/4. Its function is as follows. Catalyzes the ATP-dependent phosphorylation of N-acetyl-L-glutamate. The protein is Acetylglutamate kinase of Acinetobacter baylyi (strain ATCC 33305 / BD413 / ADP1).